A 156-amino-acid polypeptide reads, in one-letter code: 6,7-dimethyl-8-ribityllumazine synthase (156 aa).

5-amino-6-(D-ribitylamino)uracil is bound by residues Phe23, 57-59 (AFE), and 81-83 (AVI). 86–87 (ST) contributes to the (2S)-2-hydroxy-3-oxobutyl phosphate binding site. The Proton donor role is filled by His89. Phe114 lines the 5-amino-6-(D-ribitylamino)uracil pocket. Arg128 is a binding site for (2S)-2-hydroxy-3-oxobutyl phosphate.

The protein belongs to the DMRL synthase family.

It carries out the reaction (2S)-2-hydroxy-3-oxobutyl phosphate + 5-amino-6-(D-ribitylamino)uracil = 6,7-dimethyl-8-(1-D-ribityl)lumazine + phosphate + 2 H2O + H(+). It functions in the pathway cofactor biosynthesis; riboflavin biosynthesis; riboflavin from 2-hydroxy-3-oxobutyl phosphate and 5-amino-6-(D-ribitylamino)uracil: step 1/2. In terms of biological role, catalyzes the formation of 6,7-dimethyl-8-ribityllumazine by condensation of 5-amino-6-(D-ribitylamino)uracil with 3,4-dihydroxy-2-butanone 4-phosphate. This is the penultimate step in the biosynthesis of riboflavin. This is 6,7-dimethyl-8-ribityllumazine synthase from Campylobacter curvus (strain 525.92).